We begin with the raw amino-acid sequence, 452 residues long: Chaperone SurA (452 aa).

The first 28 residues, 1 to 28 (MKKTLRFAAVVSSLAASAALLVAAPAAA), serve as a signal peptide directing secretion. 2 PpiC domains span residues 186–288 (QQDL…RLVD) and 302–400 (IVQT…QVLN).

Its subcellular location is the periplasm. It carries out the reaction [protein]-peptidylproline (omega=180) = [protein]-peptidylproline (omega=0). Its function is as follows. Chaperone involved in the correct folding and assembly of outer membrane proteins. Recognizes specific patterns of aromatic residues and the orientation of their side chains, which are found more frequently in integral outer membrane proteins. May act in both early periplasmic and late outer membrane-associated steps of protein maturation. This is Chaperone SurA from Burkholderia orbicola (strain AU 1054).